The following is a 112-amino-acid chain: Small ribosomal subunit protein bS6 (112 aa).

Belongs to the bacterial ribosomal protein bS6 family.

Functionally, binds together with bS18 to 16S ribosomal RNA. This is Small ribosomal subunit protein bS6 from Chlamydia caviae (strain ATCC VR-813 / DSM 19441 / 03DC25 / GPIC) (Chlamydophila caviae).